A 562-amino-acid chain; its full sequence is Arginine--tRNA ligase (562 aa).

Positions 126–136 (ANPTGPLNVGH) match the 'HIGH' region motif.

It belongs to the class-I aminoacyl-tRNA synthetase family. Monomer.

Its subcellular location is the cytoplasm. The enzyme catalyses tRNA(Arg) + L-arginine + ATP = L-arginyl-tRNA(Arg) + AMP + diphosphate. The chain is Arginine--tRNA ligase from Salinibacter ruber (strain DSM 13855 / M31).